A 907-amino-acid chain; its full sequence is Whirlin (907 aa).

Residues 140-223 (LVSLRRAKAH…LVLSVYSAGR (84 aa)) enclose the PDZ 1 domain. A disordered region spans residues 243-264 (SISPPSGLPQPHGGALRQQEGD). Residues 279–361 (KVNLVLGDGR…LILTVKDVGR (83 aa)) form the PDZ 2 domain. Disordered stretches follow at residues 502-540 (SMKA…TVSS), 565-663 (SVDD…SSKR), 684-717 (QSPP…QTGT), and 742-815 (PQTR…PTST). Low complexity predominate over residues 521 to 540 (SYSDTGSSTGSHGTSTTVSS). Positions 609 to 626 (PPSSMPSCSGTVFSAPQN) are enriched in polar residues. Positions 628–642 (SPPAGTAPTPGTSSA) are enriched in low complexity. Position 685 is a phosphoserine (S685). The span at 743–762 (QTRTASTLSQLSDSGQTLSE) shows a compositional bias: polar residues. Basic and acidic residues predominate over residues 789-800 (SSKELPRNERPT). A PDZ 3 domain is found at 816–899 (LVRVKKSAAT…TKDRDYIDFL (84 aa)).

As to quaternary structure, forms homooligomers. Interacts (via C-terminal PDZ domain) with MYO15A; this interaction is necessary for localization of WHRN to stereocilia tips. Interacts (via C-terminal PDZ domain) with MPP1/p55. Interacts with LRRC4C/NGL1. Interacts with MYO7A. Interacts with RPGR. Interacts with EPS8. Interacts with CASK. Interacts with CIB2. Component of USH2 complex, composed of ADGRV1, PDZD7, USH2A and WHRN. Interacts (via PDZ domains) with PDZD7; the interaction is direct. Interacts (via N-terminal PDZ domain) with USH2A (via cytoplasmic region). Interacts with ADGRV1/MASS1 (via cytoplasmic region).

It is found in the cytoplasm. The protein resides in the cell projection. It localises to the stereocilium. Its subcellular location is the growth cone. The protein localises to the photoreceptor inner segment. It is found in the synapse. In terms of biological role, involved in hearing and vision as member of the USH2 complex. Necessary for elongation and maintenance of inner and outer hair cell stereocilia in the organ of Corti in the inner ear. Involved in the maintenance of the hair bundle ankle region, which connects stereocilia in cochlear hair cells of the inner ear. In retina photoreceptors, required for the maintenance of periciliary membrane complex that seems to play a role in regulating intracellular protein transport. This chain is Whirlin, found in Homo sapiens (Human).